The sequence spans 73 residues: uncharacterized protein (73 aa).

One can recognise an HTH deoR-type domain in the interval 8–63; that stretch reads MLTRIKSVYMFIQEKGLVTTQELVDEFGITPRTIQRDLNVLAYNDLVHSPSRGKWE. A DNA-binding region (H-T-H motif) is located at residues 25–44; sequence VTTQELVDEFGITPRTIQRD.

This is an uncharacterized protein from Bacillus subtilis (strain 168).